The following is a 258-amino-acid chain: MSKRPGDIIISTPGSKVRRRLNFDSPYRNRATAPTVHVTNRKRAWVNRPMYRKPTMYRMYRSPDIPRGCEGPCKVQSFEQRDDVKHLGICKVISDVTRGPGLTHRVGKRFCIKSIYILGKIWLDETIKKQNHTNNVIFYLLRDRRPYGNAPQDFGQIFNMFDNEPSTATIKNDLRDRFQVLRKFHATVVGGPYGMKEQALVKRFYRLNHHVTYNHQEAGKYENHTENALLLYMACTHASNPVYATLKIRIYFYDSIGN.

The short motif at 3 to 20 (KRPGDIIISTPGSKVRRR) is the Bipartite nuclear localization signal element. A Nuclear localization signal motif is present at residues 41–55 (RKRAWVNRPMYRKPT). A zinc finger lies at 69–86 (CEGPCKVQSFEQRDDVKH). The short motif at 102–123 (LTHRVGKRFCIKSIYILGKIWL) is the Nuclear export signal element. The Bipartite nuclear localization signal motif lies at 202 to 249 (KRFYRLNHHVTYNHQEAGKYENHTENALLLYMACTHASNPVYATLKIR).

Belongs to the geminiviridae capsid protein family. Homomultimer. Binds to single-stranded and double-stranded viral DNA. Interacts (via nuclear localization signals) with host importin alpha-1a.

It localises to the virion. The protein resides in the host nucleus. Encapsidates the viral DNA into characteristic twinned ('geminate') particles. Binds the genomic viral ssDNA and shuttles it into and out of the cell nucleus. The CP of bipartite geminiviruses is not required for cell-to-cell or systemic movement. This is Capsid protein from African cassava mosaic virus (isolate West Kenyan 844) (ACMV).